The primary structure comprises 135 residues: C-type natriuretic peptide (135 aa).

An N-terminal signal peptide occupies residues M1–A25. Positions D26–K113 are excised as a propeptide. Positions E46 to D67 are disordered. A disulfide bridge links C119 with C135.

The protein belongs to the natriuretic peptide family.

The protein localises to the secreted. In terms of biological role, hormone which may be vasoactive and natriuretic. Has a cGMP-stimulating activity. In Squalus acanthias (Spiny dogfish), this protein is C-type natriuretic peptide.